Here is a 546-residue protein sequence, read N- to C-terminus: Chaperonin GroEL (546 aa).

ATP is bound by residues 30 to 33 (TLGP), lysine 51, 87 to 91 (DGTTT), glycine 415, and aspartate 497. A disordered region spans residues 527-546 (PKKDSPAPAMPGGGMGGMDF). Over residues 537 to 546 (PGGGMGGMDF) the composition is skewed to gly residues.

The protein belongs to the chaperonin (HSP60) family. In terms of assembly, forms a cylinder of 14 subunits composed of two heptameric rings stacked back-to-back. Interacts with the co-chaperonin GroES.

It is found in the cytoplasm. It catalyses the reaction ATP + H2O + a folded polypeptide = ADP + phosphate + an unfolded polypeptide.. Functionally, together with its co-chaperonin GroES, plays an essential role in assisting protein folding. The GroEL-GroES system forms a nano-cage that allows encapsulation of the non-native substrate proteins and provides a physical environment optimized to promote and accelerate protein folding. The polypeptide is Chaperonin GroEL (Methylorubrum populi (strain ATCC BAA-705 / NCIMB 13946 / BJ001) (Methylobacterium populi)).